The chain runs to 180 residues: Secreted RxLR effector protein 19 (180 aa).

Residues 1–19 (MKLLLRALATFVLLNGVDS) form the signal peptide. Residues 25 to 171 (FQKCNVTGGP…IFALGALWGP (147 aa)) enclose the Jacalin-type lectin domain. A RxLR-dEER motif is present at residues 52–77 (RALRLCGVDFVDGIGVTIWDLSVEEN).

It belongs to the RxLR effector family.

Its subcellular location is the secreted. It is found in the host cytoplasm. It localises to the host nucleus. Effector that partially suppresses the tobacco programmed cell death induced by cell death-inducing proteins. The sequence is that of Secreted RxLR effector protein 19 from Plasmopara viticola (Downy mildew of grapevine).